We begin with the raw amino-acid sequence, 842 residues long: Elongation factor 2 (842 aa).

Residues 17 to 346 (TNVRNMSVIA…MIVMHLPSPV (330 aa)) form the tr-type G domain. Residues 26–33 (AHVDHGKS), 158–161 (NKVD), and 213–215 (SGL) each bind GTP. A Diphthamide modification is found at H699.

Belongs to the TRAFAC class translation factor GTPase superfamily. Classic translation factor GTPase family. EF-G/EF-2 subfamily.

It is found in the cytoplasm. The catalysed reaction is GTP + H2O = GDP + phosphate + H(+). Functionally, catalyzes the GTP-dependent ribosomal translocation step during translation elongation. During this step, the ribosome changes from the pre-translocational (PRE) to the post-translocational (POST) state as the newly formed A-site-bound peptidyl-tRNA and P-site-bound deacylated tRNA move to the P and E sites, respectively. Catalyzes the coordinated movement of the two tRNA molecules, the mRNA and conformational changes in the ribosome. In Candida glabrata (strain ATCC 2001 / BCRC 20586 / JCM 3761 / NBRC 0622 / NRRL Y-65 / CBS 138) (Yeast), this protein is Elongation factor 2 (EFT1).